The primary structure comprises 281 residues: MKFIGAHVSAAGGVENTIARAQAIGANAFALFTKNQRQWQAAPLSEASIHAFKLACEKGGFRPEQILPHDSYLINLGHPDPDGLAKSRDAFLDEMKRCEQLGLCYLNFHPGSHLKQIPEAASLKLVSESINWALERSQGVTAVIENTAGQGTNLGWSFEHLATIIDGVEDKSRVGICFDTCHAFAAGYDLRTADACAAVFAEFEQTVGFQYLKGMHINGAKCTFGSRVDRHHSLREGNLGEAVFHHIMNDDRFDGIPLILETIDESIWGDEIRWLRSLAKA.

9 residues coordinate Zn(2+): His-69, His-109, Glu-145, Asp-179, His-182, His-216, Asp-229, His-231, and Glu-261.

Belongs to the AP endonuclease 2 family. The cofactor is Zn(2+).

The enzyme catalyses Endonucleolytic cleavage to 5'-phosphooligonucleotide end-products.. Endonuclease IV plays a role in DNA repair. It cleaves phosphodiester bonds at apurinic or apyrimidinic (AP) sites, generating a 3'-hydroxyl group and a 5'-terminal sugar phosphate. The chain is Probable endonuclease 4 from Aeromonas hydrophila subsp. hydrophila (strain ATCC 7966 / DSM 30187 / BCRC 13018 / CCUG 14551 / JCM 1027 / KCTC 2358 / NCIMB 9240 / NCTC 8049).